Reading from the N-terminus, the 424-residue chain is CUGBP Elav-like family member 4 (424 aa).

The interval 8–27 (VANGQPDNSSLSSNPTGHMN) is disordered. Residues 9 to 24 (ANGQPDNSSLSSNPTG) show a composition bias toward polar residues. 2 RRM domains span residues 47–128 (IKLF…PADS) and 342–417 (PQPP…LKRP).

This sequence belongs to the CELF/BRUNOL family.

The protein resides in the nucleus. Its subcellular location is the cytoplasm. In terms of biological role, RNA-binding protein that may be implicated in the regulation of pre-mRNA alternative splicing. The chain is CUGBP Elav-like family member 4 (celf4) from Xenopus tropicalis (Western clawed frog).